The following is a 382-amino-acid chain: Alanine racemase 1 (382 aa).

The active-site Proton acceptor; specific for D-alanine is K39. Residue K39 is modified to N6-(pyridoxal phosphate)lysine. R138 provides a ligand contact to substrate. The active-site Proton acceptor; specific for L-alanine is the Y265. M312 is a binding site for substrate.

It belongs to the alanine racemase family. The cofactor is pyridoxal 5'-phosphate.

It carries out the reaction L-alanine = D-alanine. Its pathway is amino-acid biosynthesis; D-alanine biosynthesis; D-alanine from L-alanine: step 1/1. In terms of biological role, catalyzes the interconversion of L-alanine and D-alanine. May also act on other amino acids. This chain is Alanine racemase 1 (alr1), found in Staphylococcus aureus (strain NCTC 8325 / PS 47).